The following is a 340-amino-acid chain: Adenosine kinase (340 aa).

Asp292 is a catalytic residue.

The protein belongs to the carbohydrate kinase PfkB family. Mg(2+) serves as cofactor.

It carries out the reaction adenosine + ATP = AMP + ADP + H(+). It functions in the pathway purine metabolism; AMP biosynthesis via salvage pathway; AMP from adenosine: step 1/1. The protein is Adenosine kinase (ado1) of Schizosaccharomyces pombe (strain 972 / ATCC 24843) (Fission yeast).